A 181-amino-acid chain; its full sequence is MRLFGYARVSTSQQSLDVQIKALKAENVRATRIFTDKVSGSHVNREGLRMLRLKVEEGDVVLVKKLDRLGRDTADMIQLIKEFDDMGVAIRFLDDGISTEGTMGKMVVTILSAVAQAERLRILERTNEGRLEAKAKGVKFGRKPTVDKAEVFTLHGQGISAMEIAKRLKIGRSTVYKVLAS.

Positions 2–137 (RLFGYARVST…EGRLEAKAKG (136 aa)) constitute a Resolvase/invertase-type recombinase catalytic domain. Residue serine 10 is the O-(5'-phospho-DNA)-serine intermediate of the active site. A DNA-binding region (H-T-H motif) is located at residues 161–180 (AMEIAKRLKIGRSTVYKVLA).

It belongs to the site-specific recombinase resolvase family.

In terms of biological role, site-specific recombination protein. This Pseudomonas putida (Arthrobacter siderocapsulatus) protein is Resolvase/recombinase.